The sequence spans 326 residues: D-threonate 4-phosphate dehydrogenase (326 aa).

Substrate is bound by residues H138 and T139. Residues H168, H212, and H267 each contribute to the a divalent metal cation site. Substrate-binding residues include K275, N284, and R293.

It belongs to the PdxA family. PdxA2 subfamily. In terms of assembly, homodimer. Requires a divalent metal cation as cofactor.

It catalyses the reaction 4-O-phospho-D-threonate + NAD(+) = dihydroxyacetone phosphate + CO2 + NADH. Catalyzes the NAD-dependent oxidation and subsequent decarboxylation of D-threonate 4-phosphate to produce dihydroxyacetone phosphate (DHAP). Can also use 4-hydroxy-L-threonine 4-phosphate as substrate. This chain is D-threonate 4-phosphate dehydrogenase, found in Pectobacterium atrosepticum (strain SCRI 1043 / ATCC BAA-672) (Erwinia carotovora subsp. atroseptica).